Here is a 377-residue protein sequence, read N- to C-terminus: tRNA(Met) cytidine acetate ligase (377 aa).

ATP contacts are provided by residues 7–20 (VVEY…HRYH), glycine 101, asparagine 151, and arginine 176.

It belongs to the TmcAL family.

Its subcellular location is the cytoplasm. The catalysed reaction is cytidine(34) in elongator tRNA(Met) + acetate + ATP = N(4)-acetylcytidine(34) in elongator tRNA(Met) + AMP + diphosphate. In terms of biological role, catalyzes the formation of N(4)-acetylcytidine (ac(4)C) at the wobble position of elongator tRNA(Met), using acetate and ATP as substrates. First activates an acetate ion to form acetyladenylate (Ac-AMP) and then transfers the acetyl group to tRNA to form ac(4)C34. This is tRNA(Met) cytidine acetate ligase from Limosilactobacillus reuteri (strain DSM 20016) (Lactobacillus reuteri).